Here is a 94-residue protein sequence, read N- to C-terminus: Putative regulatory protein LEPBI_I0950 (94 aa).

The protein belongs to the RemA family.

This Leptospira biflexa serovar Patoc (strain Patoc 1 / ATCC 23582 / Paris) protein is Putative regulatory protein LEPBI_I0950.